The following is a 957-amino-acid chain: Glycine dehydrogenase (decarboxylating) (957 aa).

At K708 the chain carries N6-(pyridoxal phosphate)lysine.

The protein belongs to the GcvP family. The glycine cleavage system is composed of four proteins: P, T, L and H. The cofactor is pyridoxal 5'-phosphate.

It catalyses the reaction N(6)-[(R)-lipoyl]-L-lysyl-[glycine-cleavage complex H protein] + glycine + H(+) = N(6)-[(R)-S(8)-aminomethyldihydrolipoyl]-L-lysyl-[glycine-cleavage complex H protein] + CO2. The glycine cleavage system catalyzes the degradation of glycine. The P protein binds the alpha-amino group of glycine through its pyridoxal phosphate cofactor; CO(2) is released and the remaining methylamine moiety is then transferred to the lipoamide cofactor of the H protein. The polypeptide is Glycine dehydrogenase (decarboxylating) (Salmonella heidelberg (strain SL476)).